Here is a 128-residue protein sequence, read N- to C-terminus: Small ribosomal subunit protein uS9 (128 aa).

Residues 106–128 (SRKVERKKPGRPKARKKFQFSKR) are disordered. Residues 109 to 128 (VERKKPGRPKARKKFQFSKR) are compositionally biased toward basic residues.

Belongs to the universal ribosomal protein uS9 family.

This is Small ribosomal subunit protein uS9 from Azobacteroides pseudotrichonymphae genomovar. CFP2.